Here is a 245-residue protein sequence, read N- to C-terminus: DNA polymerase zeta processivity subunit (245 aa).

Positions 3–203 (RWVEKWLRVY…PPKIKLTSLV (201 aa)) constitute an HORMA domain.

It belongs to the MAD2 family. As to quaternary structure, forms DNA polymerase zeta with REV3. Interacts with REV1.

Its subcellular location is the mitochondrion. Its function is as follows. Required for DNA damage induced mutagenesis. Involved in DNA repair, mitochondrial DNA repair and translesion synthesis. Has a role in the bypass of abasic (AP) sites. The protein is DNA polymerase zeta processivity subunit (REV7) of Saccharomyces cerevisiae (strain ATCC 204508 / S288c) (Baker's yeast).